An 86-amino-acid polypeptide reads, in one-letter code: High affinity immunoglobulin epsilon receptor subunit gamma (86 aa).

The N-terminal stretch at 1 to 18 (MYPAVVLLLLLLVEQAAA) is a signal peptide. The Extracellular segment spans residues 19 to 23 (LGEPQ). Residues 24 to 44 (LCYILDAILFLYGIILTLLYC) traverse the membrane as a helical segment. At 45–86 (RLKIQVRKATVASYEKPDGIYTGLSTRNQETYETLKHEKPPQ) the chain is on the cytoplasmic side. Positions 54 to 82 (TVASYEKPDGIYTGLSTRNQETYETLKHE) constitute an ITAM domain. A Phosphotyrosine modification is found at Tyr65. Ser69 is subject to Phosphoserine. Tyr76 is subject to Phosphotyrosine. The residue at position 78 (Thr78) is a Phosphothreonine.

This sequence belongs to the CD3Z/FCER1G family. IgE Fc receptor is a tetramer of an alpha chain, a beta chain, and two disulfide linked gamma chains. Associates with FCGR1A; forms a functional signaling complex. The signaling subunit of immunoglobulin gamma (IgG) Fc receptor complex. As a homodimer or a heterodimer of CD247 and FCER1G, associates with the ligand binding subunit FCGR3A to form a functional receptor complex. Associates with CLEC6A. Interacts with CLEC4E. Interacts (via ITAM domain) with SYK (via SH2 domains); activates SYK, enabling integrin-mediated activation of neutrophils and macrophages. Interacts with CSF2RB and recruits SYK in response to IL3 stimulation; this interaction is direct. Interacts with CD300LH; the interaction may be indirect. Interacts with CD300LD. Interacts with TARM1.

The protein resides in the cell membrane. Its function is as follows. Adapter protein containing an immunoreceptor tyrosine-based activation motif (ITAM) that transduces activation signals from various immunoreceptors. As a component of the high-affinity immunoglobulin E (IgE) receptor, mediates allergic inflammatory signaling in mast cells. As a constitutive component of interleukin-3 receptor complex, selectively mediates interleukin 4/IL4 production by basophils priming T-cells toward effector T-helper 2 subset. Associates with pattern recognition receptors CLEC4D and CLEC4E to form a functional signaling complex in myeloid cells. Binding of mycobacterial trehalose 6,6'-dimycolate (TDM) to this receptor complex leads to phosphorylation of ITAM, triggering activation of SYK, CARD9 and NF-kappa-B, consequently driving maturation of antigen-presenting cells and shaping antigen-specific priming of T-cells toward effector T-helper 1 and T-helper 17 cell subtypes. May function cooperatively with other activating receptors. Functionally linked to integrin beta-2/ITGB2-mediated neutrophil activation. Also involved in integrin alpha-2/ITGA2-mediated platelet activation. The chain is High affinity immunoglobulin epsilon receptor subunit gamma (FCER1G) from Cavia porcellus (Guinea pig).